The chain runs to 102 residues: Synaptobrevin-like protein 5 (102 aa).

The region spanning 17 to 77 (KIMRTRRELD…VKIKREMSWK (61 aa)) is the v-SNARE coiled-coil homology domain.

This is Synaptobrevin-like protein 5 (snb-5) from Caenorhabditis elegans.